A 325-amino-acid chain; its full sequence is Phosphatidylserine decarboxylase proenzyme (325 aa).

Active-site charge relay system; for autoendoproteolytic cleavage activity residues include D90, H147, and S253. The Schiff-base intermediate with substrate; via pyruvic acid; for decarboxylase activity role is filled by S253. S253 is modified (pyruvic acid (Ser); by autocatalysis). The interval 281–325 (MASKMSSQKAITPEQTTETPVQASNEFDDNAGETKKDTPSEGADS) is disordered. Residues 284-305 (KMSSQKAITPEQTTETPVQASN) are compositionally biased toward polar residues.

Belongs to the phosphatidylserine decarboxylase family. PSD-B subfamily. Prokaryotic type I sub-subfamily. Heterodimer of a large membrane-associated beta subunit and a small pyruvoyl-containing alpha subunit. Pyruvate serves as cofactor. Is synthesized initially as an inactive proenzyme. Formation of the active enzyme involves a self-maturation process in which the active site pyruvoyl group is generated from an internal serine residue via an autocatalytic post-translational modification. Two non-identical subunits are generated from the proenzyme in this reaction, and the pyruvate is formed at the N-terminus of the alpha chain, which is derived from the carboxyl end of the proenzyme. The autoendoproteolytic cleavage occurs by a canonical serine protease mechanism, in which the side chain hydroxyl group of the serine supplies its oxygen atom to form the C-terminus of the beta chain, while the remainder of the serine residue undergoes an oxidative deamination to produce ammonia and the pyruvoyl prosthetic group on the alpha chain. During this reaction, the Ser that is part of the protease active site of the proenzyme becomes the pyruvoyl prosthetic group, which constitutes an essential element of the active site of the mature decarboxylase.

It localises to the cell membrane. It catalyses the reaction a 1,2-diacyl-sn-glycero-3-phospho-L-serine + H(+) = a 1,2-diacyl-sn-glycero-3-phosphoethanolamine + CO2. It functions in the pathway phospholipid metabolism; phosphatidylethanolamine biosynthesis; phosphatidylethanolamine from CDP-diacylglycerol: step 2/2. In terms of biological role, catalyzes the formation of phosphatidylethanolamine (PtdEtn) from phosphatidylserine (PtdSer). The protein is Phosphatidylserine decarboxylase proenzyme of Alteromonas mediterranea (strain DSM 17117 / CIP 110805 / LMG 28347 / Deep ecotype).